Here is a 262-residue protein sequence, read N- to C-terminus: Acyl-[acyl-carrier-protein]--UDP-N-acetylglucosamine O-acyltransferase (262 aa).

The protein belongs to the transferase hexapeptide repeat family. LpxA subfamily. In terms of assembly, homotrimer.

The protein resides in the cytoplasm. The enzyme catalyses a (3R)-hydroxyacyl-[ACP] + UDP-N-acetyl-alpha-D-glucosamine = a UDP-3-O-[(3R)-3-hydroxyacyl]-N-acetyl-alpha-D-glucosamine + holo-[ACP]. Its pathway is glycolipid biosynthesis; lipid IV(A) biosynthesis; lipid IV(A) from (3R)-3-hydroxytetradecanoyl-[acyl-carrier-protein] and UDP-N-acetyl-alpha-D-glucosamine: step 1/6. In terms of biological role, involved in the biosynthesis of lipid A, a phosphorylated glycolipid that anchors the lipopolysaccharide to the outer membrane of the cell. The sequence is that of Acyl-[acyl-carrier-protein]--UDP-N-acetylglucosamine O-acyltransferase from Blochmanniella floridana.